The following is a 288-amino-acid chain: Probable anion import ATP-binding protein HVO_1886 (288 aa).

Positions 1 to 18 (MTTERPDAGDSGSEKPDE) are enriched in basic and acidic residues. The interval 1-33 (MTTERPDAGDSGSEKPDETAAPDPAANGARRSK) is disordered. Residues 36–282 (LAARSLGHGF…PDDDRVRQFV (247 aa)) form the ABC transporter domain. Residue 68 to 75 (GPSGTGKT) coordinates ATP.

This sequence belongs to the ABC transporter superfamily. As to quaternary structure, the complex is composed of two ATP-binding proteins (HVO_1886), two transmembrane proteins (HVO_1887) and a solute-binding protein (HVO_1888).

The protein resides in the cell membrane. In terms of biological role, part of an ABC transporter complex involved in anions import. Responsible for energy coupling to the transport system. This chain is Probable anion import ATP-binding protein HVO_1886, found in Haloferax volcanii (strain ATCC 29605 / DSM 3757 / JCM 8879 / NBRC 14742 / NCIMB 2012 / VKM B-1768 / DS2) (Halobacterium volcanii).